Consider the following 328-residue polypeptide: DNA-directed RNA polymerase subunit alpha (328 aa).

The segment at 1–234 (MQNSPTEYLK…GQLSVFADLE (234 aa)) is alpha N-terminal domain (alpha-NTD). Positions 248 to 328 (VDPILLRPVD…NWPPAGLEKV (81 aa)) are alpha C-terminal domain (alpha-CTD).

It belongs to the RNA polymerase alpha chain family. Homodimer. The RNAP catalytic core consists of 2 alpha, 1 beta, 1 beta' and 1 omega subunit. When a sigma factor is associated with the core the holoenzyme is formed, which can initiate transcription.

It carries out the reaction RNA(n) + a ribonucleoside 5'-triphosphate = RNA(n+1) + diphosphate. DNA-dependent RNA polymerase catalyzes the transcription of DNA into RNA using the four ribonucleoside triphosphates as substrates. The polypeptide is DNA-directed RNA polymerase subunit alpha (Methylobacillus flagellatus (strain ATCC 51484 / DSM 6875 / VKM B-1610 / KT)).